Consider the following 24-residue polypeptide: General odorant-binding protein (24 aa).

Belongs to the PBP/GOBP family. In terms of assembly, homodimer. As to expression, antenna.

Its function is as follows. Present in the aqueous fluid surrounding olfactory sensory dendrites and are thought to aid in the capture and transport of hydrophobic odorants into and through this fluid. The sequence is that of General odorant-binding protein from Antheraea polyphemus (Polyphemus moth).